The following is a 168-amino-acid chain: Vasopressin-neurophysin 2-copeptin (168 aa).

An N-terminal signal peptide occupies residues Met-1–Ala-23. Cysteines 24 and 29 form a disulfide. The residue at position 32 (Gly-32) is a Glycine amide. 7 disulfides stabilise this stretch: Cys-45/Cys-89, Cys-48/Cys-62, Cys-56/Cys-79, Cys-63/Cys-69, Cys-96/Cys-108, Cys-102/Cys-120, and Cys-109/Cys-114. N-linked (GlcNAc...) asparagine glycosylation occurs at Asn-135.

This sequence belongs to the vasopressin/oxytocin family. In terms of assembly, interacts with vasopressin receptors V1bR/AVPR1B (Ki=85 pM), V1aR/AVPR1A (Ki=0.6 nM) and V2R/AVPR2 (Ki=4.9 nM). Interacts with oxytocin receptor (OXTR) (Ki=110 nM).

Its subcellular location is the secreted. In terms of biological role, neurophysin 2 specifically binds vasopressin. Its function is as follows. Vasopressin has a direct antidiuretic action on the kidney, it also causes vasoconstriction of the peripheral vessels. Acts by binding to vasopressin receptors (V1bR/AVPR1B, V1aR/AVPR1A, and V2R/AVPR2). In Rattus norvegicus (Rat), this protein is Vasopressin-neurophysin 2-copeptin (Avp).